A 430-amino-acid chain; its full sequence is 3-phosphoshikimate 1-carboxyvinyltransferase (430 aa).

Positions 25, 26, and 30 each coordinate 3-phosphoshikimate. Residue Lys-25 participates in phosphoenolpyruvate binding. 2 residues coordinate phosphoenolpyruvate: Gly-97 and Arg-125. Ser-170, Gln-172, Asp-318, and Lys-345 together coordinate 3-phosphoshikimate. Position 172 (Gln-172) interacts with phosphoenolpyruvate. Residue Asp-318 is the Proton acceptor of the active site. The phosphoenolpyruvate site is built by Arg-349 and Arg-391.

This sequence belongs to the EPSP synthase family. In terms of assembly, monomer.

It localises to the cytoplasm. It carries out the reaction 3-phosphoshikimate + phosphoenolpyruvate = 5-O-(1-carboxyvinyl)-3-phosphoshikimate + phosphate. The protein operates within metabolic intermediate biosynthesis; chorismate biosynthesis; chorismate from D-erythrose 4-phosphate and phosphoenolpyruvate: step 6/7. Catalyzes the transfer of the enolpyruvyl moiety of phosphoenolpyruvate (PEP) to the 5-hydroxyl of shikimate-3-phosphate (S3P) to produce enolpyruvyl shikimate-3-phosphate and inorganic phosphate. The sequence is that of 3-phosphoshikimate 1-carboxyvinyltransferase from Shouchella clausii (strain KSM-K16) (Alkalihalobacillus clausii).